The following is a 442-amino-acid chain: Lipoyl synthase, apicoplast (442 aa).

The signal sequence occupies residues 1–23; that stretch reads MRVLTPSLYIYAFFIFCVRFKCG. Residues 104–154 are disordered; that stretch reads LGEHQLKGKRKESATNVEKEKKEKEQQEERLPVPKVGNKMPEKKPDWFHVP. Basic and acidic residues predominate over residues 114-135; that stretch reads KESATNVEKEKKEKEQQEERLP. Cys-177, Cys-182, Cys-188, Cys-203, Cys-207, Cys-210, and Ser-418 together coordinate [4Fe-4S] cluster. The Radical SAM core domain occupies 189-407; it reads WNIGTATIML…KEEGMKMGFK (219 aa).

The protein belongs to the radical SAM superfamily. Lipoyl synthase family. The cofactor is [4Fe-4S] cluster.

It localises to the plastid. It is found in the apicoplast. The enzyme catalyses [[Fe-S] cluster scaffold protein carrying a second [4Fe-4S](2+) cluster] + N(6)-octanoyl-L-lysyl-[protein] + 2 oxidized [2Fe-2S]-[ferredoxin] + 2 S-adenosyl-L-methionine + 4 H(+) = [[Fe-S] cluster scaffold protein] + N(6)-[(R)-dihydrolipoyl]-L-lysyl-[protein] + 4 Fe(3+) + 2 hydrogen sulfide + 2 5'-deoxyadenosine + 2 L-methionine + 2 reduced [2Fe-2S]-[ferredoxin]. Its pathway is protein modification; protein lipoylation via endogenous pathway; protein N(6)-(lipoyl)lysine from octanoyl-[acyl-carrier-protein]: step 2/2. Its function is as follows. Catalyzes the radical-mediated insertion of two sulfur atoms into the C-6 and C-8 positions of the octanoyl moiety bound to the lipoyl domains of lipoate-dependent enzymes, thereby converting the octanoylated domains into lipoylated derivatives. The sequence is that of Lipoyl synthase, apicoplast from Plasmodium knowlesi (strain H).